The primary structure comprises 238 residues: 1-(5-phosphoribosyl)-5-[(5-phosphoribosylamino)methylideneamino] imidazole-4-carboxamide isomerase (238 aa).

Asp7 (proton acceptor) is an active-site residue. The Proton donor role is filled by Asp129.

The protein belongs to the HisA/HisF family.

The protein resides in the cytoplasm. The catalysed reaction is 1-(5-phospho-beta-D-ribosyl)-5-[(5-phospho-beta-D-ribosylamino)methylideneamino]imidazole-4-carboxamide = 5-[(5-phospho-1-deoxy-D-ribulos-1-ylimino)methylamino]-1-(5-phospho-beta-D-ribosyl)imidazole-4-carboxamide. The protein operates within amino-acid biosynthesis; L-histidine biosynthesis; L-histidine from 5-phospho-alpha-D-ribose 1-diphosphate: step 4/9. In Leuconostoc mesenteroides subsp. mesenteroides (strain ATCC 8293 / DSM 20343 / BCRC 11652 / CCM 1803 / JCM 6124 / NCDO 523 / NBRC 100496 / NCIMB 8023 / NCTC 12954 / NRRL B-1118 / 37Y), this protein is 1-(5-phosphoribosyl)-5-[(5-phosphoribosylamino)methylideneamino] imidazole-4-carboxamide isomerase.